Reading from the N-terminus, the 78-residue chain is Structural DNA-binding protein p10 (78 aa).

A compositionally biased stretch (low complexity) spans 1 to 25; that stretch reads MPTKAGTKSTANKKTTKGSSKSGSA. Residues 1-41 form a disordered region; that stretch reads MPTKAGTKSTANKKTTKGSSKSGSARGHTGKTHAPPSMHSG.

This sequence belongs to the asfivirus P10 family.

Its subcellular location is the virion. In terms of biological role, may play a role in genome packaging through direct interaction with viral DNA. Binds to ssDNA and dsDNA with the same apparent affinity in vitro. The sequence is that of Structural DNA-binding protein p10 from African swine fever virus (isolate Warthog/Namibia/Wart80/1980) (ASFV).